The sequence spans 92 residues: Small ribosomal subunit protein uS19 (92 aa).

It belongs to the universal ribosomal protein uS19 family.

Its function is as follows. Protein S19 forms a complex with S13 that binds strongly to the 16S ribosomal RNA. The sequence is that of Small ribosomal subunit protein uS19 from Trichlorobacter lovleyi (strain ATCC BAA-1151 / DSM 17278 / SZ) (Geobacter lovleyi).